The following is a 95-amino-acid chain: Integration host factor subunit beta (95 aa).

Belongs to the bacterial histone-like protein family. Heterodimer of an alpha and a beta chain.

This protein is one of the two subunits of integration host factor, a specific DNA-binding protein that functions in genetic recombination as well as in transcriptional and translational control. The protein is Integration host factor subunit beta of Ruegeria sp. (strain TM1040) (Silicibacter sp.).